Here is a 377-residue protein sequence, read N- to C-terminus: Queuine tRNA-ribosyltransferase (377 aa).

The active-site Proton acceptor is Asp-89. Substrate-binding positions include 89–93 (DSGGF), Asp-143, Gln-187, and Gly-214. The interval 245-251 (GVGKPED) is RNA binding. Asp-264 acts as the Nucleophile in catalysis. An RNA binding; important for wobble base 34 recognition region spans residues 269 to 273 (TRNAR). The Zn(2+) site is built by Cys-302, Cys-304, Cys-307, and His-333.

This sequence belongs to the queuine tRNA-ribosyltransferase family. As to quaternary structure, homodimer. Within each dimer, one monomer is responsible for RNA recognition and catalysis, while the other monomer binds to the replacement base PreQ1. Zn(2+) serves as cofactor.

It carries out the reaction 7-aminomethyl-7-carbaguanine + guanosine(34) in tRNA = 7-aminomethyl-7-carbaguanosine(34) in tRNA + guanine. It participates in tRNA modification; tRNA-queuosine biosynthesis. Catalyzes the base-exchange of a guanine (G) residue with the queuine precursor 7-aminomethyl-7-deazaguanine (PreQ1) at position 34 (anticodon wobble position) in tRNAs with GU(N) anticodons (tRNA-Asp, -Asn, -His and -Tyr). Catalysis occurs through a double-displacement mechanism. The nucleophile active site attacks the C1' of nucleotide 34 to detach the guanine base from the RNA, forming a covalent enzyme-RNA intermediate. The proton acceptor active site deprotonates the incoming PreQ1, allowing a nucleophilic attack on the C1' of the ribose to form the product. After dissociation, two additional enzymatic reactions on the tRNA convert PreQ1 to queuine (Q), resulting in the hypermodified nucleoside queuosine (7-(((4,5-cis-dihydroxy-2-cyclopenten-1-yl)amino)methyl)-7-deazaguanosine). This chain is Queuine tRNA-ribosyltransferase, found in Shewanella sediminis (strain HAW-EB3).